Consider the following 632-residue polypeptide: 1,4-alpha-glucan branching enzyme GlgB (632 aa).

The active-site Nucleophile is Asp310. Glu363 functions as the Proton donor in the catalytic mechanism.

This sequence belongs to the glycosyl hydrolase 13 family. GlgB subfamily. Monomer.

It carries out the reaction Transfers a segment of a (1-&gt;4)-alpha-D-glucan chain to a primary hydroxy group in a similar glucan chain.. It participates in glycan biosynthesis; glycogen biosynthesis. Catalyzes the formation of the alpha-1,6-glucosidic linkages in glycogen by scission of a 1,4-alpha-linked oligosaccharide from growing alpha-1,4-glucan chains and the subsequent attachment of the oligosaccharide to the alpha-1,6 position. This is 1,4-alpha-glucan branching enzyme GlgB from Desulfitobacterium hafniense (strain Y51).